The primary structure comprises 654 residues: MQKEEAKELIKSLVEKINQWNYEYYQLNKPSVSDLEYDKALLELEKLEKEHPDLILSNSPTFRIGSFASEKFTKFVYQKPMLSLAKAYNYDDINSFINNISKIVPTENINFNIEPKIDGLSIALRYKQGKLVKAATRGDGSEGEDVTENIYQIKSIPKLINYFNDLEVRGEVFITKNDFKKINESNNFANARNAASGTLRQLDANIVAERNLSAFLYEIVEPEKHGIYYQHEALEFMKNLDFPTNPFSKVVEIEELEESISDFAEIKNKLDYDADGLVIKLNDLQMWDKLGKTSKFPKHSIAFKYDVEVASSRITDILTSVGRTGKITYIANILPVLLNQTTVKAATLHNHNFIKDMNININDEVNIIKAGEIIPKVISLKEEKNYVDYYKKATNCPSCGSQLVEFEGIVDQFCTNDECPDKNINNIYHFASRNCLNIVGLGLSTVKDFYPKFIKNIKDIFDLHKYRAELIKLPRYRDLKVDNILNSIESAKNKKFSKVIFALGIKHIGQRAAKLIADNYANFAELLDDHNLLKLQNTKNIGPKIIESLIEFISSPANQDLLAFLDAIFNYEGKAKVISTILSGYTFVITGVLSEPRSHFVKLIEEHSGNVSSAISSKTSYLLAGSDAGSKLEKAYKTGTKVINEEQFYDLIKQ.

NAD(+) contacts are provided by residues 34-38 (DLEYD), 83-84 (SL), and E114. Catalysis depends on K116, which acts as the N6-AMP-lysine intermediate. NAD(+) is bound by residues R137, E171, K280, and K304. Zn(2+) is bound by residues C396, C399, C414, and C419. One can recognise a BRCT domain in the interval 577–654 (VISTILSGYT…EEQFYDLIKQ (78 aa)).

Belongs to the NAD-dependent DNA ligase family. LigA subfamily. It depends on Mg(2+) as a cofactor. Mn(2+) is required as a cofactor.

The enzyme catalyses NAD(+) + (deoxyribonucleotide)n-3'-hydroxyl + 5'-phospho-(deoxyribonucleotide)m = (deoxyribonucleotide)n+m + AMP + beta-nicotinamide D-nucleotide.. In terms of biological role, DNA ligase that catalyzes the formation of phosphodiester linkages between 5'-phosphoryl and 3'-hydroxyl groups in double-stranded DNA using NAD as a coenzyme and as the energy source for the reaction. It is essential for DNA replication and repair of damaged DNA. This is DNA ligase from Mycoplasmopsis agalactiae (strain NCTC 10123 / CIP 59.7 / PG2) (Mycoplasma agalactiae).